The sequence spans 687 residues: Transketolase 2 (687 aa).

H47 contacts substrate. Thiamine diphosphate contacts are provided by residues H87 and 135–137 (GPL). D176 provides a ligand contact to Mg(2+). Residues G177 and N206 each contribute to the thiamine diphosphate site. N206 and I208 together coordinate Mg(2+). 3 residues coordinate substrate: H282, R379, and S406. H282 is a binding site for thiamine diphosphate. E432 (proton donor) is an active-site residue. Thiamine diphosphate is bound at residue F458. The substrate site is built by H482, D490, H494, and R541.

This sequence belongs to the transketolase family. Mg(2+) serves as cofactor. The cofactor is thiamine diphosphate.

The enzyme catalyses D-sedoheptulose 7-phosphate + D-glyceraldehyde 3-phosphate = aldehydo-D-ribose 5-phosphate + D-xylulose 5-phosphate. With respect to regulation, activity is increased sixfold following autotrophic growth on methanol compared with that of heterotrophically grown cells. In terms of biological role, catalyzes the transfer of a two-carbon ketol group from a ketose donor to an aldose acceptor, via a covalent intermediate with the cofactor thiamine pyrophosphate. The protein is Transketolase 2 of Xanthobacter flavus.